Consider the following 73-residue polypeptide: Translation initiation factor IF-1 (73 aa).

Residues 1 to 73 (MAKKDGAIEV…SRGRIVYRYK (73 aa)) form the S1-like domain.

The protein belongs to the IF-1 family. Component of the 30S ribosomal translation pre-initiation complex which assembles on the 30S ribosome in the order IF-2 and IF-3, IF-1 and N-formylmethionyl-tRNA(fMet); mRNA recruitment can occur at any time during PIC assembly.

Its subcellular location is the cytoplasm. Its function is as follows. One of the essential components for the initiation of protein synthesis. Stabilizes the binding of IF-2 and IF-3 on the 30S subunit to which N-formylmethionyl-tRNA(fMet) subsequently binds. Helps modulate mRNA selection, yielding the 30S pre-initiation complex (PIC). Upon addition of the 50S ribosomal subunit IF-1, IF-2 and IF-3 are released leaving the mature 70S translation initiation complex. The polypeptide is Translation initiation factor IF-1 (Mycobacterium avium (strain 104)).